We begin with the raw amino-acid sequence, 1651 residues long: MDSKKKSSTEAEGSKERGLVHVWQAGSFSLTPERLPGWGGKTVLQAALGVRHGVLLTEDGEVYSFGTLPWKSESAEICPSSPLLESALVGHHVITVATGSFHSGAVTESGVVYMWGENAAGQCAVANQQYVPEPSPVSISDSETSPSLAVRILQLACGEEHTLALSLSREIWAWGTGCQLGLITTTFPVTKPQKVEHLAGRVVLQVACGAFHSLALVQCLPPQDLKPVPERCNQCSQLLITMTDKEDHVIISDSHCCPLGVTLSESQAEKHASPAPSPHPEALDEQGEVFENTVVEAELNMGSSQTTSGSAISTQQNVVGTAEVSSARTAPSYPDTHAVTAYLQKLSEHSMRENHEPGEKPPQVQPLVEEAVPDLHSPPTTSTSALNSLVVSCASAVGVRVAATYEAGALSLKKVMNFYSTAPCETAAQSGSASTGPESLKDLREEQVKQESLQGKKSSSLMDIREEELEGGSRRLSLPGLLSQVSPRLLRKAARVKTRTVVLTPTYSGEADALLPSLRTEVWTWGKGKEGQLGHGDVLPRLQPLCVKCLDGKEVIHLEAGGSHSLALTAKSQVYSWGSNTFGQLGHSEFPTTVPRLSKVSSENGVWSVAAGQDYSLFLVDTEDFQPGLYYSGRQDRAEGDTLPENPSGTKTPVLLSCSKLGYISRVTAGKDSYLALVDKNIMGYIASLHELASTERRFYSKLSEIKSQILRPLLSLENLGTVTTVQLLQEVASRFSKLCYLIGQHGASLSSYLQGMKEASSLVIMKHSSLFLDSYTEYCTSVSNFLVMGGFQLLAKPAIDFLNKNQELLQDLSEVNDENTQLMEILNMLFFLPIRRLHNYAKVLLKLATCFEVTSPEYQKLQDSSSCYESLALHLGKKRKEAEYTLSFWKTFPGKMTDSLRKPERRLLCESSNRALSLQHAGRFSVNWFILFNDALVHAQFSTHHVFPLATLWAEPLSEEAGSVNGLKITTPEEQFTLISSTPQEKTKWLRAISQAVDQALRGTSDFPLYGGGSSVQRQEPPISRSAKYTFYKDTRLKDATYDGRWLSGKPHGRGVLKWPDGKMYSGMFRNGLEDGYGEYRIPNKALNKEDHYVGHWKEGKMCGQGVYSYASGEVFEGCFQDNMRHGHGLLRSGKLTSSSPSMFIGQWVMDKKAGYGVFDDITRGEKYMGMWQDDVCQGNGVVVTQFGLYYEGNFHLNKMMGNGVLLSEDDTIYEGEFSDDWTLSGKGTLTMPHGDYIEGYFSGEWGSGIKITGTYFKPSLYESDKDKPKAFRKLGNLAVAADEKWRAVFEECWRQLGCESPGQGEVWKAWDNIAVALTTNRRQHKDSPEILSRSQTQTLESLEYIPQHIGAFSVEKYDDIKKYLIKACDTPLHPLGRLVETLVAVYRMTYVGVGANRRLLQEAVKEIKSYLKRIFQLVRFLFPELPEEGSTIPLSAPLPTGRRSFCTGKSDSRSESPEPGYVVTSSGLLLPVLLPRLYPPLFMLYALDNDREEDIYWECVLRLNKQPDIALLGFLGVQKKFWPATLSILGESKKVLSTTKDACFASAVECLQQISTTFTPSDKLKVIQQTFEEISQSVLASLQEDFLWSMDDLFPVFLYVVLRARIRNLGSEVHLIEDLMDPFLQHGEQGIMFTTLKACYFQIQREKLN.

RCC1 repeat units follow at residues 59–108 (DGEV…AVTE), 109–167 (SGVV…ALSL), and 169–218 (REIW…ALVQ). Residues 425–462 (ETAAQSGSASTGPESLKDLREEQVKQESLQGKKSSSLM) form a disordered region. A compositionally biased stretch (polar residues) spans 427–437 (AAQSGSASTGP). Over residues 439-449 (SLKDLREEQVK) the composition is skewed to basic and acidic residues. Over residues 450-461 (QESLQGKKSSSL) the composition is skewed to polar residues. 4 positions are modified to phosphoserine: serine 459, serine 460, serine 477, and serine 486. A Phosphothreonine modification is found at threonine 504. 2 RCC1 repeats span residues 519 to 570 (RTEV…ALTA) and 572 to 621 (SQVY…FLVD). Lysine 527 is subject to N6-acetyllysine. The DH domain occupies 684 to 879 (GYIASLHELA…ESLALHLGKK (196 aa)). The 107-residue stretch at 895–1001 (GKMTDSLRKP…RAISQAVDQA (107 aa)) folds into the PH domain. MORN repeat units follow at residues 1043 to 1065 (YDGRWLSGKPHGRGVLKWPDGKM), 1066 to 1088 (YSGMFRNGLEDGYGEYRIPNKAL), 1094 to 1116 (YVGHWKEGKMCGQGVYSYASGEV), 1117 to 1139 (FEGCFQDNMRHGHGLLRSGKLTS), 1145 to 1167 (FIGQWVMDKKAGYGVFDDITRGE), 1169 to 1191 (YMGMWQDDVCQGNGVVVTQFGLY), 1192 to 1214 (YEGNFHLNKMMGNGVLLSEDDTI), and 1215 to 1238 (YEGEFSDDWTLSGKGTLTMPHGDY). A Phosphoserine modification is found at serine 1329. Residues 1507–1651 (KQPDIALLGF…YFQIQREKLN (145 aa)) enclose the VPS9 domain.

As to quaternary structure, forms a heteromeric complex with ALS2CL. Interacts with ALS2CL.

Functionally, may act as a GTPase regulator. Controls survival and growth of spinal motoneurons. This Mus musculus (Mouse) protein is Alsin (Als2).